A 76-amino-acid polypeptide reads, in one-letter code: Small ribosomal subunit protein bS18 (76 aa).

Belongs to the bacterial ribosomal protein bS18 family. Part of the 30S ribosomal subunit. Forms a tight heterodimer with protein bS6.

Functionally, binds as a heterodimer with protein bS6 to the central domain of the 16S rRNA, where it helps stabilize the platform of the 30S subunit. This chain is Small ribosomal subunit protein bS18, found in Tolumonas auensis (strain DSM 9187 / NBRC 110442 / TA 4).